We begin with the raw amino-acid sequence, 488 residues long: Cobyric acid synthase (488 aa).

In terms of domain architecture, GATase cobBQ-type spans 247–440 (LLRVIVPVLP…VHGVFDEPTA (194 aa)). The active-site Nucleophile is C328. H432 is an active-site residue.

This sequence belongs to the CobB/CobQ family. CobQ subfamily.

It functions in the pathway cofactor biosynthesis; adenosylcobalamin biosynthesis. Its function is as follows. Catalyzes amidations at positions B, D, E, and G on adenosylcobyrinic A,C-diamide. NH(2) groups are provided by glutamine, and one molecule of ATP is hydrogenolyzed for each amidation. The protein is Cobyric acid synthase of Cupriavidus pinatubonensis (strain JMP 134 / LMG 1197) (Cupriavidus necator (strain JMP 134)).